A 181-amino-acid polypeptide reads, in one-letter code: CAPA peptides (181 aa).

The signal sequence occupies residues 1 to 22 (MQDNRFFILMILLVFSTSLNQG). The propeptide occupies 23-29 (QKLKAND). Ile41 carries the post-translational modification Isoleucine amide. Residues 44–54 (NSEISSFSRSE) constitute a propeptide that is removed on maturation. Ile65 bears the Isoleucine amide mark. Positions 68–181 (SDVSSFDNLN…ENERDTANFL (114 aa)) are excised as a propeptide. The tract at residues 159 to 181 (TQGQGGYTPRLGRENERDTANFL) is disordered. Residues 169–181 (LGRENERDTANFL) show a composition bias toward basic and acidic residues.

Post-translationally, a pyrokinin potentially constituted by residues Asn-158 to Gly-170 has so far not been detected and might be completely absent in ants. Periviscerokinin 1 and 2 are expressed in central brain, antennal lobes and gnathal, thoracic and abominal ganglia. Periviscerokinin 2 is also expressed in the retrocerebral complex (at protein level).

The protein localises to the secreted. Functionally, periviscerokinins mediate visceral muscle contractile activity (myotropic activity). The protein is CAPA peptides of Camponotus floridanus (Florida carpenter ant).